The sequence spans 151 residues: NAD(P)H-quinone oxidoreductase subunit N (151 aa).

It belongs to the complex I NdhN subunit family. As to quaternary structure, NDH-1 can be composed of about 15 different subunits; different subcomplexes with different compositions have been identified which probably have different functions.

The protein localises to the cellular thylakoid membrane. The catalysed reaction is a plastoquinone + NADH + (n+1) H(+)(in) = a plastoquinol + NAD(+) + n H(+)(out). The enzyme catalyses a plastoquinone + NADPH + (n+1) H(+)(in) = a plastoquinol + NADP(+) + n H(+)(out). Its function is as follows. NDH-1 shuttles electrons from an unknown electron donor, via FMN and iron-sulfur (Fe-S) centers, to quinones in the respiratory and/or the photosynthetic chain. The immediate electron acceptor for the enzyme in this species is believed to be plastoquinone. Couples the redox reaction to proton translocation, and thus conserves the redox energy in a proton gradient. Cyanobacterial NDH-1 also plays a role in inorganic carbon-concentration. The polypeptide is NAD(P)H-quinone oxidoreductase subunit N (Acaryochloris marina (strain MBIC 11017)).